The primary structure comprises 151 residues: MHALQAKILDPRIGNEFPLPAYATTGSAGLDLRAMLKEDTLLEPGQTLLIPTGLSIYIGDPGLAALILPRSGLGHKHGIVLGNLVGLIDSDYQGELMVSCWNRGHTAFNIAVGERIAQLVLVPVVQAHFELVEAFDESQRGAGGFGHSGSH.

Residues 70 to 72 (RSG), Asn83, 87 to 89 (LID), and Met97 each bind substrate.

It belongs to the dUTPase family. It depends on Mg(2+) as a cofactor.

The catalysed reaction is dUTP + H2O = dUMP + diphosphate + H(+). It functions in the pathway pyrimidine metabolism; dUMP biosynthesis; dUMP from dCTP (dUTP route): step 2/2. Functionally, this enzyme is involved in nucleotide metabolism: it produces dUMP, the immediate precursor of thymidine nucleotides and it decreases the intracellular concentration of dUTP so that uracil cannot be incorporated into DNA. The sequence is that of Deoxyuridine 5'-triphosphate nucleotidohydrolase from Pseudomonas syringae pv. syringae (strain B728a).